Consider the following 99-residue polypeptide: Plastocyanin A'/A'' (99 aa).

Residues 1–99 enclose the Plastocyanin-like domain; that stretch reads IEVLLGSDDG…AGMVGKVTVN (99 aa). Cu cation-binding residues include His-37, Cys-84, His-87, and Met-92.

Belongs to the plastocyanin family. Cu(2+) serves as cofactor.

The protein localises to the plastid. It localises to the chloroplast thylakoid membrane. Participates in electron transfer between P700 and the cytochrome b6-f complex in photosystem I. This chain is Plastocyanin A'/A'', found in Nicotiana tabacum (Common tobacco).